We begin with the raw amino-acid sequence, 87 residues long: Large ribosomal subunit protein bL31B (87 aa).

It belongs to the bacterial ribosomal protein bL31 family. Type B subfamily. As to quaternary structure, part of the 50S ribosomal subunit.

The polypeptide is Large ribosomal subunit protein bL31B (Escherichia coli O9:H4 (strain HS)).